The following is a 391-amino-acid chain: Pectate lyase B (391 aa).

The N-terminal stretch at 1–30 is a signal peptide; that stretch reads MKKTVRSLCSTALALTLGFTLLSGPASVQA. Residues aspartate 181, aspartate 203, and aspartate 207 each contribute to the Ca(2+) site. Arginine 305 is a catalytic residue.

It belongs to the polysaccharide lyase 1 family. Ca(2+) serves as cofactor.

It is found in the secreted. The catalysed reaction is Eliminative cleavage of (1-&gt;4)-alpha-D-galacturonan to give oligosaccharides with 4-deoxy-alpha-D-galact-4-enuronosyl groups at their non-reducing ends.. It catalyses the reaction Eliminative cleavage of (1-&gt;4)-alpha-D-galacturonan methyl ester to give oligosaccharides with 4-deoxy-6-O-methyl-alpha-D-galact-4-enuronosyl groups at their non-reducing ends.. It functions in the pathway glycan metabolism; pectin degradation. Functionally, catalyzes the depolymerization of both polygalacturonate and pectins of various methyl esterification degree, with an endo mode of action. Shows the highest activity on 20 to 34% methylated pectin but retains 67%, 51%, 25%, and 1% of its maximum activity on polygalacturonate and 8.5%, 55 to 70%, and 90% methylated pectin, respectively. The sequence is that of Pectate lyase B from Paenibacillus amylolyticus.